A 452-amino-acid chain; its full sequence is Matrilin-3 (452 aa).

The signal sequence occupies residues 1–24 (MRRALGTLGCCLALLLPLLPAARG). Residues 54 to 229 (DLVFIIDSSR…GVIEKLTSKF (176 aa)) enclose the VWFA domain. 4 consecutive EGF-like domains span residues 235 to 275 (AANT…RTCS), 276 to 316 (AVDV…KTCS), 317 to 357 (AMDV…KTCS), and 358 to 398 (AVDV…KTCS). 12 disulfides stabilise this stretch: Cys239/Cys250, Cys246/Cys259, Cys261/Cys274, Cys280/Cys291, Cys287/Cys300, Cys302/Cys315, Cys321/Cys332, Cys328/Cys341, Cys343/Cys356, Cys362/Cys373, Cys369/Cys382, and Cys384/Cys397. A glycan (N-linked (GlcNAc...) asparagine) is linked at Asn295. Residues 419 to 451 (ALQDSVTSRLEALSTKLDEVSQKLQAYQDRQQV) are a coiled coil.

As to quaternary structure, can form homooligomers (monomers, dimers, trimers and tetramers) and heterooligomers with matrilin-1. Expression is restricted to cartilaginous tissues.

It localises to the secreted. Its function is as follows. Major component of the extracellular matrix of cartilage and may play a role in the formation of extracellular filamentous networks. The protein is Matrilin-3 (MATN3) of Gallus gallus (Chicken).